We begin with the raw amino-acid sequence, 524 residues long: MNGVDINSNLDSIKAKAEDIRNLLLTTSTGNWEDILGHFVVLSGEYGSLVREVNNIYDSVAVFPEQVTGDPNLIPNLLRTKLSPELETKNRDIINQYVSKNSTHYDPGNQEENIPPLKLHIKSFNDRIDKVDQEFENKIQQISKHKLTKPSASHDTAILKDILSITMLGSGIKINAQQQLAQQQQQQATINALQQQQRLLNAQQQQQQQQQPQALYKLPATNTANTSTNTPSSTIVINSPSPGGIHHNVPTPPTNLNAAGTRTSPPNVQQYVNSPPPQQQQQQQINTVIGTPNTIPTTPTATVSTAATYKPVASPQQQVTSKQVPIQSTNKPLPQQQPSIQIQPQQSIVQMVQNVLPNTTSPPVNNNNQSPINSGIGGGQFKPSAINIANANSGTSTIQQQIQLQQQQLQQQIQLQQQLAQQQQQNQQNQQNQQNQQNQQNQQIHQHIQHLTPQQQAQLQQQMLQQQQLQQQFQQQQLSQQLLQQQQLHQQQQPNQTIQNPFHNFQANNFRVQNPTNFNPPQNQ.

2 coiled-coil regions span residues 117 to 146 (LKLH…SKHK) and 175 to 211 (NAQQ…QQQQ). 3 disordered regions span residues 312–340 (VASP…QPSI), 356–379 (LPNT…IGGG), and 430–451 (QQNQ…IQHL). The span at 314–333 (SPQQQVTSKQVPIQSTNKPL) shows a compositional bias: polar residues. The span at 356–374 (LPNTTSPPVNNNNQSPINS) shows a compositional bias: low complexity. Positions 398 to 478 (IQQQIQLQQQ…LQQQFQQQQL (81 aa)) form a coiled coil.

It belongs to the Mediator complex subunit 8 family. In terms of assembly, component of the Mediator complex. May be part of a multisubunit E3 ubiquitin-protein ligase complex.

It is found in the nucleus. It participates in protein modification; protein ubiquitination. In terms of biological role, component of the Mediator complex, a coactivator involved in the regulated transcription of nearly all RNA polymerase II-dependent genes. Mediator functions as a bridge to convey information from gene-specific regulatory proteins to the basal RNA polymerase II transcription machinery. Mediator is recruited to promoters by direct interactions with regulatory proteins and serves as a scaffold for the assembly of a functional preinitiation complex with RNA polymerase II and the general transcription factors. May play a role as a target recruitment subunit in E3 ubiquitin-protein ligase complexes and thus in ubiquitination and subsequent proteasomal degradation of target proteins. In Dictyostelium discoideum (Social amoeba), this protein is Putative mediator of RNA polymerase II transcription subunit 8 (med8).